We begin with the raw amino-acid sequence, 443 residues long: 3-phosphoshikimate 1-carboxyvinyltransferase (443 aa).

Residues 1-22 (MSHASRPTPLEARGSTPLTGRV) form a disordered region. Positions 28, 29, and 33 each coordinate 3-phosphoshikimate. Position 28 (K28) interacts with phosphoenolpyruvate. Residues G101 and R129 each coordinate phosphoenolpyruvate. S174, Q176, D326, and K353 together coordinate 3-phosphoshikimate. Phosphoenolpyruvate is bound at residue Q176. D326 serves as the catalytic Proton acceptor. R357 and R400 together coordinate phosphoenolpyruvate.

The protein belongs to the EPSP synthase family. In terms of assembly, monomer.

The protein localises to the cytoplasm. It carries out the reaction 3-phosphoshikimate + phosphoenolpyruvate = 5-O-(1-carboxyvinyl)-3-phosphoshikimate + phosphate. It functions in the pathway metabolic intermediate biosynthesis; chorismate biosynthesis; chorismate from D-erythrose 4-phosphate and phosphoenolpyruvate: step 6/7. Catalyzes the transfer of the enolpyruvyl moiety of phosphoenolpyruvate (PEP) to the 5-hydroxyl of shikimate-3-phosphate (S3P) to produce enolpyruvyl shikimate-3-phosphate and inorganic phosphate. The protein is 3-phosphoshikimate 1-carboxyvinyltransferase of Afipia carboxidovorans (strain ATCC 49405 / DSM 1227 / KCTC 32145 / OM5) (Oligotropha carboxidovorans).